The following is a 617-amino-acid chain: Estrogen receptor (617 aa).

Residues 1–54 are disordered; sequence MSEEQARAEAPAGARQRRRSELEGYSVSLASLKLSPMYPEEEQRTTGGISSTAH. Positions 1 to 186 are modulating; it reads MSEEQARAEA…AIGLVKEIRY (186 aa). NR C4-type zinc fingers lie at residues 187 to 207 and 223 to 247; these read CSVC…CEGC and CPAT…LRKC. A DNA-binding region (nuclear receptor) is located at residues 187–252; it reads CSVCSDYASG…RLRKCYEVGM (66 aa). The hinge stretch occupies residues 253 to 315; that stretch reads MKGGFRKERG…GGGVADVVCM (63 aa). The interval 269 to 303 is disordered; it reads NRRPSGLKERERGYSKAQSGSDVREALPQDGQSSS. The region spanning 316-552 is the NR LBD domain; that stretch reads SPEQVLLLLL…DLLLEMLDAH (237 aa). Residues 568-617 form a disordered region; sequence VSSSPTTTATTPTTNTTTTTTTTTHHPSNGSTCPADLPSNPPGPGQSPSP. A compositionally biased stretch (low complexity) spans 573 to 591; it reads TTTATTPTTNTTTTTTTTT. A compositionally biased stretch (pro residues) spans 606–617; the sequence is SNPPGPGQSPSP.

The protein belongs to the nuclear hormone receptor family. NR3 subfamily. Binds DNA as a homodimer. Can form a heterodimer with ER-beta. Ovary and testis.

The protein resides in the nucleus. Its function is as follows. The steroid hormones and their receptors are involved in the regulation of eukaryotic gene expression and affect cellular proliferation and differentiation in target tissues. The polypeptide is Estrogen receptor (esr1) (Ictalurus punctatus (Channel catfish)).